We begin with the raw amino-acid sequence, 960 residues long: MWRLRRAAVACEVCQSLVKHSSGIKGSLPLQKLHLVSRSIYHSHYPTLKLQRPQLRTSFQQFSSLTNLPLRKLKFSPIKYGYQPRRNFWPARLATRLLKLRYLILGSAVGGGYTAKKTFDQWKDMIPDLSEYKWIVPDIVWEIDEYIDFEKIRKALPNSEDLVKLAPDFDKIVESLSLLKDFFTSGSPGETAFRATDHGSESDKHFRKVSDKEKIDQLQEELLHTQLKYQRILERLEKENKELRKLVLQKDDKGIHHRKLKKSLIDMYSEVLDVLSDYDASYNTQDHLPRVVVVGDQSAGKTSVLEMIAQARIFPRGSGEMMTRSPVKVTLSEGPHHVALFKDSSREFDLTKEEDLAALRHEIELRMRKNVKEGCTVSPETISLNVKGPGLQRMVLVDLPGVINTVTSGMAPDTKETIFSISKAYMQNPNAIILCIQDGSVDAERSIVTDLVSQMDPHGRRTIFVLTKVDLAEKNVASPSRIQQIIEGKLFPMKALGYFAVVTGKGNSSESIEAIREYEEEFFQNSKLLKTSMLKAHQVTTRNLSLAVSDCFWKMVRESVEQQADSFKATRFNLETEWKNNYPRLRELDRNELFEKAKNEILDEVISLSQATPKHWEEILQQSLWERVSTHVIENIYLPAAQTMNSGTFNTTVDIKLKQWTDKQLPNKAVEVAWETLQGEFSRFMTEPKGKEHDDIFDKLKEAVKEESIKRHKWNDFAEDSLRVIQHNALEDRSISDKQQWDAAIYFMEEALQARLKDTENAIENMVGPDWKKRWLYWKNRTQEQCVHNETKNELEKMLKCNEEHPAYLASDEITTVRKNLESRGVEVDPSLIKDTWHQVYRRHFLKTALNHCNLCRRGFYYYQRHFVDSELECNDVVLFWRIQRMLAITANTLRQQLTNTEVRRLEKNVKEVLEDFAEDGEKKIKLLTGKRVQLAEDLKKVREIQEKLDAFIEALHQEK.

The transit peptide at 1 to 87 (MWRLRRAAVA…IKYGYQPRRN (87 aa)) directs the protein to the mitochondrion. Residues 88–96 (FWPARLATR) lie on the Mitochondrial matrix side of the membrane. A helical membrane pass occupies residues 97 to 113 (LLKLRYLILGSAVGGGY). Residues 114–770 (TAKKTFDQWK…NAIENMVGPD (657 aa)) are Mitochondrial intermembrane-facing. Residues 210–254 (SDKEKIDQLQEELLHTQLKYQRILERLEKENKELRKLVLQKDDKG) adopt a coiled-coil conformation. Lysine 228 bears the N6-acetyllysine mark. Positions 285–561 (QDHLPRVVVV…FWKMVRESVE (277 aa)) constitute a Dynamin-type G domain. Positions 295–302 (GDQSAGKT) are G1 motif. Residues serine 298, glycine 300, lysine 301, threonine 302, serine 303, and glycine 317 each contribute to the GTP site. Threonine 302 lines the Mg(2+) pocket. Residues 321–324 (MMTR) are G2 motif. Mg(2+) is bound by residues threonine 323 and aspartate 398. Residues 398–401 (DLPG) are G3 motif. Positions 467-470 (TKVD) are G4 motif. Lysine 468, aspartate 470, and threonine 503 together coordinate GTP. The G5 motif stretch occupies residues 501 to 504 (VVTG). 2 stalk region regions span residues 589 to 836 (DRNE…IKDT) and 874 to 928 (CNDV…IKLL). A paddle region region spans residues 736-856 (SDKQQWDAAI…KTALNHCNLC (121 aa)). The stretch at 771–781 (WKKRWLYWKNR) is an intramembrane region. The Mitochondrial intermembrane segment spans residues 782–960 (TQEQCVHNET…AFIEALHQEK (179 aa)). A disulfide bridge connects residues cysteine 856 and cysteine 874. Residues 895–960 (RQQLTNTEVR…AFIEALHQEK (66 aa)) are a coiled coil.

Belongs to the TRAFAC class dynamin-like GTPase superfamily. Dynamin/Fzo/YdjA family. Oligomeric complex consisting of membrane-bound and soluble forms of OPA1. Interacts with RCC1L; RCC1L acts as a guanine nucleotide exchange factor (GEF) for OPA1 by exchanging bound GDP for free GTP. Interacts with CHCHD3 and IMMT; these interactions occur preferentially with soluble OPA1 forms. Interacts with PRELID1. In terms of processing, cleaved by OMA1 or YME1L downstream of the transmembrane region in response to different signals to generate soluble forms. Cleaved by OMA1 at position S1 following stress conditions, generating the short soluble form (Dynamin-like GTPase OPA1, short form; S-OPA1). AFG3L2 is involved in the regulation of OMA1-dependent processing of OPA1. PARL-dependent proteolytic processing releases an antiapoptotic soluble form not required for mitochondrial fusion.

The protein resides in the mitochondrion inner membrane. The protein localises to the mitochondrion intermembrane space. It catalyses the reaction GTP + H2O = GDP + phosphate + H(+). Activated by guanine nucleotide exchange factor RCC1L. Functionally, dynamin-related GTPase that is essential for normal mitochondrial morphology by mediating fusion of the mitochondrial inner membranes, regulating cristae morphology and maintaining respiratory chain function. Exists in two forms: the transmembrane, long form (Dynamin-like GTPase OPA1, long form; L-OPA1), which is tethered to the inner mitochondrial membrane, and the short soluble form (Dynamin-like GTPase OPA1, short form; S-OPA1), which results from proteolytic cleavage and localizes in the intermembrane space. Both forms (L-OPA1 and S-OPA1) cooperate to catalyze the fusion of the mitochondrial inner membrane. The equilibrium between L-OPA1 and S-OPA1 is essential: excess levels of S-OPA1, produced by cleavage by OMA1 following loss of mitochondrial membrane potential, lead to an impaired equilibrium between L-OPA1 and S-OPA1, inhibiting mitochondrial fusion. The balance between L-OPA1 and S-OPA1 also influences cristae shape and morphology. Involved in remodeling cristae and the release of cytochrome c during apoptosis. Proteolytic processing by PARL in response to intrinsic apoptotic signals may lead to disassembly of OPA1 oligomers and release of the caspase activator cytochrome C (CYCS) into the mitochondrial intermembrane space. Acts as a regulator of T-helper Th17 cells, which are characterized by cells with fused mitochondria with tight cristae, by mediating mitochondrial membrane remodeling: OPA1 is required for interleukin-17 (IL-17) production. Its role in mitochondrial morphology is required for mitochondrial genome maintenance. Constitutes the transmembrane long form (L-OPA1) that plays a central role in mitochondrial inner membrane fusion and cristae morphology. L-OPA1 and the soluble short form (S-OPA1) form higher-order helical assemblies that coordinate the fusion of mitochondrial inner membranes. Inner membrane-anchored L-OPA1 molecules initiate membrane remodeling by recruiting soluble S-OPA1 to rapidly polymerize into a flexible cylindrical scaffold encaging the mitochondrial inner membrane. Once at the membrane surface, the formation of S-OPA1 helices induce bilayer curvature. OPA1 dimerization through the paddle region, which inserts into cardiolipin-containing membrane, promotes GTP hydrolysis and the helical assembly of a flexible OPA1 lattice on the membrane, which drives membrane curvature and mitochondrial fusion. Plays a role in the maintenance and remodeling of mitochondrial cristae, some invaginations of the mitochondrial inner membrane that provide an increase in the surface area. Probably acts by forming helical filaments at the inside of inner membrane tubes with the shape and dimensions of crista junctions. The equilibrium between L-OPA1 and S-OPA1 influences cristae shape and morphology: increased L-OPA1 levels promote cristae stacking and elongated mitochondria, while increased S-OPA1 levels correlated with irregular cristae packing and round mitochondria shape. In terms of biological role, constitutes the soluble short form (S-OPA1) generated by cleavage by OMA1, which plays a central role in mitochondrial inner membrane fusion and cristae morphology. The transmembrane long form (L-OPA1) and the S-OPA1 form higher-order helical assemblies that coordinate the fusion of mitochondrial inner membranes. Inner membrane-anchored L-OPA1 molecules initiate membrane remodeling by recruiting soluble S-OPA1 to rapidly polymerize into a flexible cylindrical scaffold encaging the mitochondrial inner membrane. Once at the membrane surface, the formation of S-OPA1 helices induce bilayer curvature. OPA1 dimerization through the paddle region, which inserts into cardiolipin-containing membrane, promotes GTP hydrolysis and the helical assembly of a flexible OPA1 lattice on the membrane, which drives membrane curvature and mitochondrial fusion. Excess levels of S-OPA1 produced by cleavage by OMA1 following stress conditions that induce loss of mitochondrial membrane potential, lead to an impaired equilibrium between L-OPA1 and S-OPA1, thereby inhibiting mitochondrial fusion. Involved in mitochondrial safeguard in response to transient mitochondrial membrane depolarization by mediating flickering: cleavage by OMA1 leads to excess production of S-OPA1, preventing mitochondrial hyperfusion. Plays a role in the maintenance and remodeling of mitochondrial cristae, some invaginations of the mitochondrial inner membrane that provide an increase in the surface area. Probably acts by forming helical filaments at the inside of inner membrane tubes with the shape and dimensions of crista junctions. The equilibrium between L-OPA1 and S-OPA1 influences cristae shape and morphology: increased L-OPA1 levels promote cristae stacking and elongated mitochondria, while increased S-OPA1 levels correlated with irregular cristae packing and round mitochondria shape. This is Dynamin-like GTPase OPA1, mitochondrial from Pongo abelii (Sumatran orangutan).